The sequence spans 228 residues: Ephrin-A5 (228 aa).

An N-terminal signal peptide occupies residues methionine 1–glycine 20. The 134-residue stretch at alanine 29–asparagine 162 folds into the Ephrin RBD domain. N-linked (GlcNAc...) asparagine glycosylation is present at asparagine 37. 2 disulfide bridges follow: cysteine 62-cysteine 102 and cysteine 90-cysteine 151. Asparagine 203 carries GPI-anchor amidated asparagine lipidation. The propeptide at alanine 204 to leucine 228 is removed in mature form.

Belongs to the ephrin family. In terms of tissue distribution, expressed in a graded fashion across the tectum being more strongly expressed towards the posterior pole.

It is found in the cell membrane. Functionally, cell surface GPI-bound ligand for Eph receptors, a family of receptor tyrosine kinases which are crucial for migration, repulsion and adhesion during neuronal, vascular and epithelial development. Binds promiscuously Eph receptors residing on adjacent cells, leading to contact-dependent bidirectional signaling into neighboring cells. Induces compartmentalized signaling within a caveolae-like membrane microdomain when bound to the extracellular domain of its cognate receptor. This signaling event requires the activity of the Fyn tyrosine kinase. Activates the EPHA3 receptor to regulate cell-cell adhesion and cytoskeletal organization. With the receptor EPHA2 may regulate lens fiber cells shape and interactions and be important for lens transparency maintenance. May function actively to stimulate axon fasciculation. Induces growth cone collapse and repulsion of retinal ganglion cell axons. The protein is Ephrin-A5 (EFNA5) of Gallus gallus (Chicken).